A 51-amino-acid chain; its full sequence is ATP synthase F(1) complex subunit epsilon, mitochondrial (51 aa).

Lysine 21, lysine 32, and lysine 37 each carry N6-acetyllysine; alternate. An N6-succinyllysine; alternate mark is found at lysine 21, lysine 32, and lysine 37. At lysine 44 the chain carries N6-acetyllysine.

This sequence belongs to the eukaryotic ATPase epsilon family. As to quaternary structure, component of the ATP synthase complex composed at least of ATP5F1A/subunit alpha, ATP5F1B/subunit beta, ATP5MC1/subunit c (homooctomer), MT-ATP6/subunit a, MT-ATP8/subunit 8, ATP5ME/subunit e, ATP5MF/subunit f, ATP5MG/subunit g, ATP5MK/subunit k, ATP5MJ/subunit j, ATP5F1C/subunit gamma, ATP5F1D/subunit delta, ATP5F1E/subunit epsilon, ATP5PF/subunit F6, ATP5PB/subunit b, ATP5PD/subunit d, ATP5PO/subunit OSCP. ATP synthase complex consists of a soluble F(1) head domain (subunits alpha(3) and beta(3)) - the catalytic core - and a membrane F(0) domain - the membrane proton channel (subunits c, a, 8, e, f, g, k and j). These two domains are linked by a central stalk (subunits gamma, delta, and epsilon) rotating inside the F1 region and a stationary peripheral stalk (subunits F6, b, d, and OSCP). As to expression, ubiquitous.

The protein resides in the mitochondrion. The protein localises to the mitochondrion inner membrane. Its function is as follows. Subunit epsilon, of the mitochondrial membrane ATP synthase complex (F(1)F(0) ATP synthase or Complex V) that produces ATP from ADP in the presence of a proton gradient across the membrane which is generated by electron transport complexes of the respiratory chain. ATP synthase complex consist of a soluble F(1) head domain - the catalytic core - and a membrane F(1) domain - the membrane proton channel. These two domains are linked by a central stalk rotating inside the F(1) region and a stationary peripheral stalk. During catalysis, ATP synthesis in the catalytic domain of F(1) is coupled via a rotary mechanism of the central stalk subunits to proton translocation. In vivo, can only synthesize ATP although its ATP hydrolase activity can be activated artificially in vitro. May be essential for the assembly of F(1) and may play an important role in the incorporation of the hydrophobic subunit c into the F(1)-c oligomer rotor of the mitochondrial ATP synthase complex. This Homo sapiens (Human) protein is ATP synthase F(1) complex subunit epsilon, mitochondrial.